The primary structure comprises 260 residues: MADS-box transcription factor 29 (260 aa).

Residues M1–T61 form the MADS-box domain. Residues D85–Q175 enclose the K-box domain.

As to expression, expressed in developing seeds.

The protein localises to the nucleus. In terms of biological role, probable transcription factor. This chain is MADS-box transcription factor 29 (MADS29), found in Oryza sativa subsp. japonica (Rice).